Here is a 150-residue protein sequence, read N- to C-terminus: Anthranilate synthase component 1 (150 aa).

Position 40 (Ser40) interacts with L-tryptophan. Chorismate is bound at residue Arg119.

Belongs to the anthranilate synthase component I family. As to quaternary structure, heterotetramer consisting of two non-identical subunits: a beta subunit (TrpG) and a large alpha subunit (TrpE). Mg(2+) is required as a cofactor.

The enzyme catalyses chorismate + L-glutamine = anthranilate + pyruvate + L-glutamate + H(+). It participates in amino-acid biosynthesis; L-tryptophan biosynthesis; L-tryptophan from chorismate: step 1/5. Its activity is regulated as follows. Feedback inhibited by tryptophan. Part of a heterotetrameric complex that catalyzes the two-step biosynthesis of anthranilate, an intermediate in the biosynthesis of L-tryptophan. In the first step, the glutamine-binding beta subunit (TrpG) of anthranilate synthase (AS) provides the glutamine amidotransferase activity which generates ammonia as a substrate that, along with chorismate, is used in the second step, catalyzed by the large alpha subunit of AS (TrpE) to produce anthranilate. In the absence of TrpG, TrpE can synthesize anthranilate directly from chorismate and high concentrations of ammonia. The chain is Anthranilate synthase component 1 (trpE) from Citrobacter freundii.